A 412-amino-acid chain; its full sequence is uncharacterized protein (412 aa).

The region spanning 20-199 (FFYFDFDAFF…LPIVELPGIG (180 aa)) is the UmuC domain.

It belongs to the DNA polymerase type-Y family.

This is an uncharacterized protein from Mycoplasma pneumoniae (strain ATCC 29342 / M129 / Subtype 1) (Mycoplasmoides pneumoniae).